A 193-amino-acid chain; its full sequence is MNYLAHLHLASLAESSLLGNLLADFVRGNPAGEYNPAVVAGIMMHRRVDVLTDNLPQVRACRAYFSEEHRRVAPITLDVVWDHFLARHWQQLEPSLSLPGFTQQAQSQILPHLPLTPPRFQNLNGYIWPERWLERYAELPFIGNVLAGMASRRPRLAALAGSFADVERNYHQLETQFWQFYPQMMQQAKDKQL.

It belongs to the AcpH family.

The catalysed reaction is holo-[ACP] + H2O = apo-[ACP] + (R)-4'-phosphopantetheine + H(+). Functionally, converts holo-ACP to apo-ACP by hydrolytic cleavage of the phosphopantetheine prosthetic group from ACP. This Serratia proteamaculans (strain 568) protein is Acyl carrier protein phosphodiesterase.